The primary structure comprises 285 residues: NAD kinase (285 aa).

D68 (proton acceptor) is an active-site residue. NAD(+) is bound by residues D68–G69, N142–D143, R153, K170, D172, and Q242.

Belongs to the NAD kinase family. It depends on a divalent metal cation as a cofactor.

The protein localises to the cytoplasm. It catalyses the reaction NAD(+) + ATP = ADP + NADP(+) + H(+). Functionally, involved in the regulation of the intracellular balance of NAD and NADP, and is a key enzyme in the biosynthesis of NADP. Catalyzes specifically the phosphorylation on 2'-hydroxyl of the adenosine moiety of NAD to yield NADP. The polypeptide is NAD kinase (Koribacter versatilis (strain Ellin345)).